The chain runs to 160 residues: Type IV major fimbrial protein FimA (160 aa).

The propeptide at 1–7 is leader sequence; that stretch reads MKSLQKG. N-methylphenylalanine is present on Phe-8. A helical transmembrane segment spans residues 8-28; sequence FTLIELMIVVAIIGILAAIAI.

It belongs to the N-Me-Phe pilin family. As to quaternary structure, the pili are polar flexible filaments of about 5.4 nanometers diameter and 2.5 micrometers average length; they consist of only a single polypeptide chain arranged in a helical configuration of five subunits per turn in the assembled pilus.

It localises to the fimbrium. Its subcellular location is the membrane. In terms of biological role, major component of the type IV fimbriae that plays an essential role in twitching motility, natural transformation, and protease secretion. This is Type IV major fimbrial protein FimA (fimA) from Dichelobacter nodosus (Bacteroides nodosus).